A 260-amino-acid polypeptide reads, in one-letter code: GTP cyclohydrolase FolE2 (260 aa).

The protein belongs to the GTP cyclohydrolase IV family.

The enzyme catalyses GTP + H2O = 7,8-dihydroneopterin 3'-triphosphate + formate + H(+). It functions in the pathway cofactor biosynthesis; 7,8-dihydroneopterin triphosphate biosynthesis; 7,8-dihydroneopterin triphosphate from GTP: step 1/1. Functionally, converts GTP to 7,8-dihydroneopterin triphosphate. This Desulfosudis oleivorans (strain DSM 6200 / JCM 39069 / Hxd3) (Desulfococcus oleovorans) protein is GTP cyclohydrolase FolE2.